The primary structure comprises 714 residues: Polyribonucleotide nucleotidyltransferase (714 aa).

2 residues coordinate Mg(2+): Asp486 and Asp492. A KH domain is found at 553–612 (PRIITMKINPEKIRDVIGKGGAVIRALTEETGTTIDIEEDGTIKIGCTSAEAGEEAKKRI). The region spanning 622 to 690 (GQVYDGTVLK…DKGRVRLSAK (69 aa)) is the S1 motif domain.

The protein belongs to the polyribonucleotide nucleotidyltransferase family. The cofactor is Mg(2+).

It is found in the cytoplasm. It catalyses the reaction RNA(n+1) + phosphate = RNA(n) + a ribonucleoside 5'-diphosphate. Involved in mRNA degradation. Catalyzes the phosphorolysis of single-stranded polyribonucleotides processively in the 3'- to 5'-direction. In Methylobacillus flagellatus (strain ATCC 51484 / DSM 6875 / VKM B-1610 / KT), this protein is Polyribonucleotide nucleotidyltransferase.